Consider the following 300-residue polypeptide: tRNA dimethylallyltransferase (300 aa).

Position 9–16 (9–16) interacts with ATP; that stretch reads GPTASGKS. Residue 11–16 participates in substrate binding; it reads TASGKS. The segment at 34 to 37 is interaction with substrate tRNA; sequence DSKQ.

Belongs to the IPP transferase family. As to quaternary structure, monomer. Mg(2+) is required as a cofactor.

The enzyme catalyses adenosine(37) in tRNA + dimethylallyl diphosphate = N(6)-dimethylallyladenosine(37) in tRNA + diphosphate. Its function is as follows. Catalyzes the transfer of a dimethylallyl group onto the adenine at position 37 in tRNAs that read codons beginning with uridine, leading to the formation of N6-(dimethylallyl)adenosine (i(6)A). The polypeptide is tRNA dimethylallyltransferase (Ehrlichia canis (strain Jake)).